Reading from the N-terminus, the 98-residue chain is NADH-ubiquinone oxidoreductase chain 4L (98 aa).

The next 3 membrane-spanning stretches (helical) occupy residues 1–21 (MSMV…GMLV), 29–49 (SLLC…VTIL), and 61–81 (IVLL…LVMV).

It belongs to the complex I subunit 4L family. In terms of assembly, core subunit of respiratory chain NADH dehydrogenase (Complex I) which is composed of 45 different subunits.

It is found in the mitochondrion inner membrane. It catalyses the reaction a ubiquinone + NADH + 5 H(+)(in) = a ubiquinol + NAD(+) + 4 H(+)(out). Its function is as follows. Core subunit of the mitochondrial membrane respiratory chain NADH dehydrogenase (Complex I) which catalyzes electron transfer from NADH through the respiratory chain, using ubiquinone as an electron acceptor. Part of the enzyme membrane arm which is embedded in the lipid bilayer and involved in proton translocation. The sequence is that of NADH-ubiquinone oxidoreductase chain 4L (MT-ND4L) from Vulpes vulpes (Red fox).